A 93-amino-acid chain; its full sequence is Small ribosomal subunit protein uS19 (93 aa).

It belongs to the universal ribosomal protein uS19 family.

Its function is as follows. Protein S19 forms a complex with S13 that binds strongly to the 16S ribosomal RNA. This Geotalea uraniireducens (strain Rf4) (Geobacter uraniireducens) protein is Small ribosomal subunit protein uS19.